The sequence spans 203 residues: Glycerol-3-phosphate acyltransferase (203 aa).

Helical transmembrane passes span 3–23 (NLIL…LILA), 61–81 (ILTV…ASFL), 87–107 (VLWT…FLGF), 118–138 (GVLA…WFLV), 144–164 (ISSL…FIIH), and 172–192 (THAP…PNIV).

The protein belongs to the PlsY family. Probably interacts with PlsX.

Its subcellular location is the cell inner membrane. The catalysed reaction is an acyl phosphate + sn-glycerol 3-phosphate = a 1-acyl-sn-glycero-3-phosphate + phosphate. The protein operates within lipid metabolism; phospholipid metabolism. Functionally, catalyzes the transfer of an acyl group from acyl-phosphate (acyl-PO(4)) to glycerol-3-phosphate (G3P) to form lysophosphatidic acid (LPA). This enzyme utilizes acyl-phosphate as fatty acyl donor, but not acyl-CoA or acyl-ACP. The sequence is that of Glycerol-3-phosphate acyltransferase from Campylobacter concisus (strain 13826).